The primary structure comprises 482 residues: GDP-D-glucose phosphorylase 1 (482 aa).

The segment at Met1 to Pro21 is disordered. His255 acts as the Tele-GMP-histidine intermediate in catalysis. The segment at Met461–Lys482 is disordered.

This sequence belongs to the GDPGP1 family. As to expression, expressed throughout the neuronal system, in the spermatheca and anterior hypodermal cells.

The protein resides in the cytoplasm. The catalysed reaction is GDP-alpha-D-glucose + phosphate = alpha-D-glucose 1-phosphate + GDP + H(+). Its function is as follows. Specific and highly efficient GDP-D-glucose phosphorylase regulating the levels of GDP-D-glucose in cells. The protein is GDP-D-glucose phosphorylase 1 of Caenorhabditis elegans.